We begin with the raw amino-acid sequence, 736 residues long: Oxysterol-binding protein-related protein 9 (736 aa).

Ala2 carries the N-acetylalanine modification. The PH domain occupies 2 to 99; sequence ASIMEGPLSK…WIHALEETIL (98 aa). Positions 231-367 are disordered; the sequence is KSEQRPSSLP…DRDDDAEAGS (137 aa). Residues 253–290 show a composition bias toward low complexity; sequence TPTPNSTGSGHSPPSSSLTSPSHVNLSPNTVPEFSYSS. Phosphoserine occurs at positions 306, 324, 325, 326, and 329. 2 stretches are compositionally biased toward polar residues: residues 314 to 329 and 336 to 347; these read SSGS…SGNS and TESLNSSLSNGT. Ser611 carries the phosphoserine modification.

This sequence belongs to the OSBP family. In terms of assembly, heterodimer with OSBPL11. Interacts with OSBPL10. As to expression, widely expressed.

Its subcellular location is the late endosome membrane. It localises to the golgi apparatus. The protein localises to the trans-Golgi network membrane. The enzyme catalyses a 1,2-diacyl-sn-glycero-3-phospho-(1D-myo-inositol 4-phosphate)(out) + a 1,2-diacyl-sn-glycero-3-phospho-L-serine(in) = a 1,2-diacyl-sn-glycero-3-phospho-(1D-myo-inositol 4-phosphate)(in) + a 1,2-diacyl-sn-glycero-3-phospho-L-serine(out). Interacts with OSBPL11 to function as lipid transfer proteins. Together they form a heterodimer that localizes at the ER-trans-Golgi membrane contact sites, and exchanges phosphatidylserine (1,2-diacyl-sn-glycero-3-phospho-L-serine, PS) for phosphatidylinositol-4-phosphate (1,2-diacyl-sn-glycero-3-phospho-(1D-myo-inositol 4-phosphate), PI(4)P) between the two organelles, a step that is critical for sphingomyelin synthesis in the Golgi complex. The chain is Oxysterol-binding protein-related protein 9 (OSBPL9) from Homo sapiens (Human).